A 933-amino-acid chain; its full sequence is Melanoma-associated antigen E1 (933 aa).

Disordered stretches follow at residues 1–113, 149–236, 256–282, and 360–393; these read MSLV…VSAG, GASI…GINL, SDIS…VQST, and TSGL…EDEN. Over residues 8 to 23 the composition is skewed to basic residues; sequence SRRRRGGRANGRKNSG. 4 stretches are compositionally biased toward polar residues: residues 64–97, 149–166, 173–184, and 219–236; these read GGSS…QLPT, GASI…NVQP, GTSVPPTFSEES, and APST…GINL. 2 MAGE domains span residues 467–666 and 721–912; these read MEQN…YNEA and LESK…YREA. The segment at 719–933 is interaction with DTNA; the sequence is SRLESKSRKL…RRPLVVRNLR (215 aa).

In terms of assembly, interacts with DTNA. Interacts with TRIM28.

Its subcellular location is the cytoplasm. It localises to the perinuclear region. The protein localises to the nucleus. It is found in the cell membrane. Functionally, may enhance ubiquitin ligase activity of RING-type zinc finger-containing E3 ubiquitin-protein ligases. Proposed to act through recruitment and/or stabilization of the Ubl-conjugating enzyme (E2) at the E3:substrate complex. The protein is Melanoma-associated antigen E1 (Magee1) of Rattus norvegicus (Rat).